Here is a 296-residue protein sequence, read N- to C-terminus: Beta-lactamase (296 aa).

The first 21 residues, Met1 to Ala21, serve as a signal peptide directing secretion. Ser66 serves as the catalytic Acyl-ester intermediate. Substrate is bound at residue Lys235 to Gly237.

It belongs to the class-A beta-lactamase family.

The enzyme catalyses a beta-lactam + H2O = a substituted beta-amino acid. The chain is Beta-lactamase (cblA) from Bacteroides uniformis.